The following is a 194-amino-acid chain: dTTP/UTP pyrophosphatase (194 aa).

Asp73 serves as the catalytic Proton acceptor.

It belongs to the Maf family. YhdE subfamily. The cofactor is a divalent metal cation.

Its subcellular location is the cytoplasm. The enzyme catalyses dTTP + H2O = dTMP + diphosphate + H(+). It carries out the reaction UTP + H2O = UMP + diphosphate + H(+). Its function is as follows. Nucleoside triphosphate pyrophosphatase that hydrolyzes dTTP and UTP. May have a dual role in cell division arrest and in preventing the incorporation of modified nucleotides into cellular nucleic acids. The chain is dTTP/UTP pyrophosphatase from Clostridium botulinum (strain ATCC 19397 / Type A).